A 128-amino-acid chain; its full sequence is DNA-directed RNA polymerase subunit omega (128 aa).

Residues 87–106 (ARSSQAAPKSAPGQEIGKSF) are disordered.

This sequence belongs to the RNA polymerase subunit omega family. The RNAP catalytic core consists of 2 alpha, 1 beta, 1 beta' and 1 omega subunit. When a sigma factor is associated with the core the holoenzyme is formed, which can initiate transcription.

It catalyses the reaction RNA(n) + a ribonucleoside 5'-triphosphate = RNA(n+1) + diphosphate. Functionally, promotes RNA polymerase assembly. Latches the N- and C-terminal regions of the beta' subunit thereby facilitating its interaction with the beta and alpha subunits. The sequence is that of DNA-directed RNA polymerase subunit omega from Anaplasma marginale (strain St. Maries).